The primary structure comprises 473 residues: tRNA-2-methylthio-N(6)-dimethylallyladenosine synthase (473 aa).

Positions 5 to 125 (RKLHIKSYGC…LPQLLARADQ (121 aa)) constitute an MTTase N-terminal domain. The [4Fe-4S] cluster site is built by C14, C50, C88, C166, C170, and C173. One can recognise a Radical SAM core domain in the interval 152 to 384 (RARGISAFVT…QQLIDSQQSA (233 aa)). The region spanning 387-459 (KAAIGQTVDV…RYSLLGELAA (73 aa)) is the TRAM domain.

The protein belongs to the methylthiotransferase family. MiaB subfamily. Monomer. The cofactor is [4Fe-4S] cluster.

Its subcellular location is the cytoplasm. It carries out the reaction N(6)-dimethylallyladenosine(37) in tRNA + (sulfur carrier)-SH + AH2 + 2 S-adenosyl-L-methionine = 2-methylsulfanyl-N(6)-dimethylallyladenosine(37) in tRNA + (sulfur carrier)-H + 5'-deoxyadenosine + L-methionine + A + S-adenosyl-L-homocysteine + 2 H(+). Functionally, catalyzes the methylthiolation of N6-(dimethylallyl)adenosine (i(6)A), leading to the formation of 2-methylthio-N6-(dimethylallyl)adenosine (ms(2)i(6)A) at position 37 in tRNAs that read codons beginning with uridine. This Rhodopseudomonas palustris (strain BisB5) protein is tRNA-2-methylthio-N(6)-dimethylallyladenosine synthase.